The primary structure comprises 127 residues: Large ribosomal subunit protein bL21 (127 aa).

It belongs to the bacterial ribosomal protein bL21 family. Part of the 50S ribosomal subunit. Contacts protein L20.

Its function is as follows. This protein binds to 23S rRNA in the presence of protein L20. This chain is Large ribosomal subunit protein bL21, found in Synechococcus sp. (strain ATCC 27144 / PCC 6301 / SAUG 1402/1) (Anacystis nidulans).